Reading from the N-terminus, the 181-residue chain is FMN reductase (NADH) RutF (181 aa).

It belongs to the non-flavoprotein flavin reductase family. RutF subfamily.

It carries out the reaction FMNH2 + NAD(+) = FMN + NADH + 2 H(+). Functionally, catalyzes the reduction of FMN to FMNH2 which is used to reduce pyrimidine by RutA via the Rut pathway. This Ancylobacter novellus (strain ATCC 8093 / DSM 506 / JCM 20403 / CCM 1077 / IAM 12100 / NBRC 12443 / NCIMB 10456) (Starkeya novella) protein is FMN reductase (NADH) RutF.